The primary structure comprises 493 residues: Cytochrome P450 2E1 (493 aa).

Residue 298–303 (FAGTET) participates in substrate binding. C437 provides a ligand contact to heme.

The protein belongs to the cytochrome P450 family. In terms of assembly, interacts with chaperones HSP70 and HSP90; this interaction is required for initial targeting to mitochondria. Heme serves as cofactor. Highest level in the liver and to a lesser extent in the kidney, with a higher level in the male kidney than in the female.

It localises to the endoplasmic reticulum membrane. It is found in the microsome membrane. The protein resides in the mitochondrion inner membrane. The enzyme catalyses an organic molecule + reduced [NADPH--hemoprotein reductase] + O2 = an alcohol + oxidized [NADPH--hemoprotein reductase] + H2O + H(+). The catalysed reaction is (5Z,8Z,11Z)-eicosatrienoate + reduced [NADPH--hemoprotein reductase] + O2 = 19-hydroxy-(5Z,8Z,11Z)-eicosatrienoate + oxidized [NADPH--hemoprotein reductase] + H2O + H(+). It catalyses the reaction (5Z,8Z,11Z,14Z,17Z)-eicosapentaenoate + reduced [NADPH--hemoprotein reductase] + O2 = 19-hydroxy-(5Z,8Z,11Z,14Z,17Z)-eicosapentaenoate + oxidized [NADPH--hemoprotein reductase] + H2O + H(+). It carries out the reaction (4Z,7Z,10Z,13Z,16Z,19Z)-docosahexaenoate + reduced [NADPH--hemoprotein reductase] + O2 = 21-hydroxy-(4Z,7Z,10Z,13Z,16Z,19Z)-docosahexaenoate + oxidized [NADPH--hemoprotein reductase] + H2O + H(+). The enzyme catalyses dodecanoate + reduced [NADPH--hemoprotein reductase] + O2 = 11-hydroxydodecanoate + oxidized [NADPH--hemoprotein reductase] + H2O + H(+). The catalysed reaction is tetradecanoate + reduced [NADPH--hemoprotein reductase] + O2 = 13-hydroxytetradecanoate + oxidized [NADPH--hemoprotein reductase] + H2O + H(+). It catalyses the reaction 4-nitrophenol + NADPH + O2 + H(+) = 4-nitrocatechol + NADP(+) + H2O. Its pathway is lipid metabolism; fatty acid metabolism. The omega-1 hydroxylase activity is stimulated by cytochrome b5. Its function is as follows. A cytochrome P450 monooxygenase involved in the metabolism of fatty acids. Mechanistically, uses molecular oxygen inserting one oxygen atom into a substrate, and reducing the second into a water molecule, with two electrons provided by NADPH via cytochrome P450 reductase (NADPH--hemoprotein reductase). Catalyzes the hydroxylation of carbon-hydrogen bonds. Hydroxylates fatty acids specifically at the omega-1 position displaying the highest catalytic activity for saturated fatty acids. May be involved in the oxidative metabolism of xenobiotics. The polypeptide is Cytochrome P450 2E1 (Cyp2e1) (Mus musculus (Mouse)).